A 299-amino-acid chain; its full sequence is Tyrosine recombinase XerC (299 aa).

The Core-binding (CB) domain maps to 1–85 (MQADLDAFLD…ALRGFYRYLL (85 aa)). Residues 106 to 285 (RLPRTLDADR…DFQHLAAVYD (180 aa)) enclose the Tyr recombinase domain. Residues R146, K170, H237, R240, and H263 contribute to the active site. Y272 (O-(3'-phospho-DNA)-tyrosine intermediate) is an active-site residue.

This sequence belongs to the 'phage' integrase family. XerC subfamily. Forms a cyclic heterotetrameric complex composed of two molecules of XerC and two molecules of XerD.

It localises to the cytoplasm. Site-specific tyrosine recombinase, which acts by catalyzing the cutting and rejoining of the recombining DNA molecules. The XerC-XerD complex is essential to convert dimers of the bacterial chromosome into monomers to permit their segregation at cell division. It also contributes to the segregational stability of plasmids. This chain is Tyrosine recombinase XerC, found in Azotobacter vinelandii (strain DJ / ATCC BAA-1303).